A 267-amino-acid chain; its full sequence is Tryptophan synthase alpha chain (267 aa).

Active-site proton acceptor residues include Glu43 and Asp54.

Belongs to the TrpA family. In terms of assembly, tetramer of two alpha and two beta chains.

It catalyses the reaction (1S,2R)-1-C-(indol-3-yl)glycerol 3-phosphate + L-serine = D-glyceraldehyde 3-phosphate + L-tryptophan + H2O. It participates in amino-acid biosynthesis; L-tryptophan biosynthesis; L-tryptophan from chorismate: step 5/5. The alpha subunit is responsible for the aldol cleavage of indoleglycerol phosphate to indole and glyceraldehyde 3-phosphate. This is Tryptophan synthase alpha chain from Bacillus subtilis subsp. natto.